The primary structure comprises 237 residues: E3 ubiquitin-protein ligase RNF166 (237 aa).

The segment at 33-73 (CPICLEVYHRPVAIGSCGHTFCGECLQPCLQVPSPLCPLCR) adopts an RING-type zinc-finger fold. Residues C98, C101, H113, and C117 each contribute to the Zn(2+) site. The C2HC RNF-type zinc-finger motif lies at 98 to 117 (CRGCNKKVTLAKMRAHISSC). The 17-residue stretch at 221 to 237 (DEEAAFQAALALSLSEN) folds into the UIM domain.

It localises to the cytoplasm. It catalyses the reaction S-ubiquitinyl-[E2 ubiquitin-conjugating enzyme]-L-cysteine + [acceptor protein]-L-lysine = [E2 ubiquitin-conjugating enzyme]-L-cysteine + N(6)-ubiquitinyl-[acceptor protein]-L-lysine.. The protein operates within protein modification; protein ubiquitination. In terms of biological role, E3 ubiquitin-protein ligase that promotes the ubiquitination of different substrates. In turn, participates in different biological processes including interferon production or autophagy. Plays a role in the activation of RNA virus-induced interferon-beta production by promoting the ubiquitination of TRAF3 and TRAF6. Also plays a role in the early recruitment of autophagy adapters to bacteria. Mediates 'Lys-29' and 'Lys-33'-linked ubiquitination of SQSTM1 leading to xenophagic targeting of bacteria and inhibition of their replication. This Mus musculus (Mouse) protein is E3 ubiquitin-protein ligase RNF166 (Rnf166).